A 208-amino-acid chain; its full sequence is MARYIGPSCRLCRRENMELFLKGDRCYTDKCALKRRNYPPGQHGQGRSKTSDYGVQLREKQKVKRLYGLLEKQFRSYFDRADRMKGVTGENLLSLLERRLDNVVYRLGFASSRSEARQLVRHGHFVLNGRKATIPSIQVKAGDTIVLREKSRNVAAISEALDAVVRRGIPQWLELDRDAFTGLAKTVPVREDISTPIQEQLIVELYSK.

Residues 98 to 159 form the S4 RNA-binding domain; the sequence is RRLDNVVYRL…KSRNVAAISE (62 aa).

It belongs to the universal ribosomal protein uS4 family. In terms of assembly, part of the 30S ribosomal subunit. Contacts protein S5. The interaction surface between S4 and S5 is involved in control of translational fidelity.

Its function is as follows. One of the primary rRNA binding proteins, it binds directly to 16S rRNA where it nucleates assembly of the body of the 30S subunit. Functionally, with S5 and S12 plays an important role in translational accuracy. The sequence is that of Small ribosomal subunit protein uS4 from Trichlorobacter lovleyi (strain ATCC BAA-1151 / DSM 17278 / SZ) (Geobacter lovleyi).